The sequence spans 510 residues: Probable serine/threonine-protein kinase 2 (510 aa).

Positions 111–364 (YVLNKKIGKG…ALQALGHQWF (254 aa)) constitute a Protein kinase domain. Residues 117 to 125 (IGKGSFSTA) and Lys-140 contribute to the ATP site. The Proton acceptor role is filled by Asp-230. Positions 408-428 (NDDIYNNNNNNNQLDPNKNHK) are disordered.

It belongs to the protein kinase superfamily. Ser/Thr protein kinase family.

Its subcellular location is the membrane. The enzyme catalyses L-seryl-[protein] + ATP = O-phospho-L-seryl-[protein] + ADP + H(+). It carries out the reaction L-threonyl-[protein] + ATP = O-phospho-L-threonyl-[protein] + ADP + H(+). The polypeptide is Probable serine/threonine-protein kinase 2 (PK2) (Plasmodium falciparum (isolate K1 / Thailand)).